The primary structure comprises 2051 residues: Fatty acid synthase subunit beta (2051 aa).

N-acetylmethionine is present on Met1. The interval 1–468 (MDAYSTRPLT…VYDTFDGSDL (468 aa)) is acetyltransferase. Ser274 acts as the For acetyltransferase activity in catalysis. The segment at 480 to 868 (VDCIIRLPVK…TRGVMLWKEF (389 aa)) is enoyl reductase. Thr733 is subject to Phosphothreonine. Ser1121 carries the phosphoserine modification. The dehydratase stretch occupies residues 1144–1626 (GSEINWRHAS…LPNTALKTSI (483 aa)). Lys1364 is covalently cross-linked (Glycyl lysine isopeptide (Lys-Gly) (interchain with G-Cter in ubiquitin)). The 126-residue stretch at 1523 to 1648 (NGSTLEQKVN…KFETRNEDDV (126 aa)) folds into the MaoC-like domain. Positions 1627-1845 (QHVGMINGRK…MTMQVAVPRD (219 aa)) are malonyl/palmitoyl transferase. Residue Ser1808 is the For malonyltransferase activity of the active site.

This sequence belongs to the fungal fatty acid synthetase subunit beta family. In terms of assembly, [Alpha(6)beta(6)] hexamers of two multifunctional subunits (alpha and beta).

It carries out the reaction acetyl-CoA + n malonyl-CoA + 2n NADPH + 4n H(+) = a long-chain-acyl-CoA + n CoA + n CO2 + 2n NADP(+).. The catalysed reaction is holo-[ACP] + acetyl-CoA = acetyl-[ACP] + CoA. The enzyme catalyses holo-[ACP] + malonyl-CoA = malonyl-[ACP] + CoA. It catalyses the reaction a (3R)-hydroxyacyl-[ACP] = a (2E)-enoyl-[ACP] + H2O. It carries out the reaction a 2,3-saturated acyl-[ACP] + NAD(+) = a (2E)-enoyl-[ACP] + NADH + H(+). The catalysed reaction is (9Z)-octadecenoyl-[ACP] + H2O = (9Z)-octadecenoate + holo-[ACP] + H(+). Functionally, fatty acid synthetase catalyzes the formation of long-chain fatty acids from acetyl-CoA, malonyl-CoA and NADPH. The beta subunit contains domains for: [acyl-carrier-protein] acetyltransferase and malonyltransferase, S-acyl fatty acid synthase thioesterase, enoyl-[acyl-carrier-protein] reductase, and 3-hydroxypalmitoyl-[acyl-carrier-protein] dehydratase. The sequence is that of Fatty acid synthase subunit beta (FAS1) from Saccharomyces cerevisiae (strain ATCC 204508 / S288c) (Baker's yeast).